The chain runs to 235 residues: Aspartate/glutamate leucyltransferase (235 aa).

The protein belongs to the R-transferase family. Bpt subfamily.

Its subcellular location is the cytoplasm. It carries out the reaction N-terminal L-glutamyl-[protein] + L-leucyl-tRNA(Leu) = N-terminal L-leucyl-L-glutamyl-[protein] + tRNA(Leu) + H(+). It catalyses the reaction N-terminal L-aspartyl-[protein] + L-leucyl-tRNA(Leu) = N-terminal L-leucyl-L-aspartyl-[protein] + tRNA(Leu) + H(+). In terms of biological role, functions in the N-end rule pathway of protein degradation where it conjugates Leu from its aminoacyl-tRNA to the N-termini of proteins containing an N-terminal aspartate or glutamate. The chain is Aspartate/glutamate leucyltransferase from Stutzerimonas stutzeri (strain A1501) (Pseudomonas stutzeri).